The sequence spans 210 residues: Ribosomal RNA large subunit methyltransferase E (210 aa).

Residues glycine 60, tryptophan 62, aspartate 85, aspartate 101, and aspartate 126 each coordinate S-adenosyl-L-methionine. The active-site Proton acceptor is lysine 166. Over residues 191–200 (KPKASRDKSS) the composition is skewed to basic and acidic residues. The interval 191–210 (KPKASRDKSSETFLVARDLK) is disordered.

Belongs to the class I-like SAM-binding methyltransferase superfamily. RNA methyltransferase RlmE family.

It is found in the cytoplasm. The enzyme catalyses uridine(2552) in 23S rRNA + S-adenosyl-L-methionine = 2'-O-methyluridine(2552) in 23S rRNA + S-adenosyl-L-homocysteine + H(+). Functionally, specifically methylates the uridine in position 2552 of 23S rRNA at the 2'-O position of the ribose in the fully assembled 50S ribosomal subunit. This chain is Ribosomal RNA large subunit methyltransferase E, found in Bordetella bronchiseptica (strain ATCC BAA-588 / NCTC 13252 / RB50) (Alcaligenes bronchisepticus).